The primary structure comprises 488 residues: Glutamate--tRNA ligase (488 aa).

The short motif at 8–18 (PSPTGPLHIGG) is the 'HIGH' region element. Residues C105, C107, C132, and H134 each coordinate Zn(2+). The 'KMSKS' region motif lies at 249-253 (KMSKR). Position 252 (K252) interacts with ATP.

It belongs to the class-I aminoacyl-tRNA synthetase family. Glutamate--tRNA ligase type 1 subfamily. As to quaternary structure, monomer. Zn(2+) serves as cofactor.

It is found in the cytoplasm. The catalysed reaction is tRNA(Glu) + L-glutamate + ATP = L-glutamyl-tRNA(Glu) + AMP + diphosphate. In terms of biological role, catalyzes the attachment of glutamate to tRNA(Glu) in a two-step reaction: glutamate is first activated by ATP to form Glu-AMP and then transferred to the acceptor end of tRNA(Glu). This is Glutamate--tRNA ligase from Desulfitobacterium hafniense (strain Y51).